A 234-amino-acid chain; its full sequence is STARD3 N-terminal-like protein (234 aa).

N-acetylmethionine is present on M1. Topologically, residues 1–53 (MNHLPEDMENALTGSQSSHASLRNIHSINPTQLMARIESYEGREKKGISDVRR) are cytoplasmic. Phosphoserine occurs at positions 15, 21, and 27. The 171-residue stretch at 48–218 (ISDVRRTFCL…YSPPESEAGS (171 aa)) folds into the MENTAL domain. The chain crosses the membrane as a helical span at residues 54–74 (TFCLFVTFDLLFVTLLWIIEL). At 75-97 (NVNGGIENTLEKEVMQYDYYSSY) the chain is on the extracellular side. The helical transmembrane segment at 98 to 118 (FDIFLLAVFRFKVLILAYAVC) threads the bilayer. Residues 119 to 122 (RLRH) lie on the Cytoplasmic side of the membrane. Residues 123–143 (WWAIALTTAVTSAFLLAKVIL) form a helical membrane-spanning segment. The Extracellular segment spans residues 144–150 (SKLFSQG). A helical membrane pass occupies residues 151 to 171 (AFGYVLPIISFILAWIETWFL). At 172 to 234 (DFKVLPQEAE…QDSEKPLLEL (63 aa)) the chain is on the cytoplasmic side. At S193 the chain carries Phosphoserine. The disordered stretch occupies residues 200-234 (PGGLSDGQFYSPPESEAGSEEAEEKQDSEKPLLEL). The FFAT motif lies at 208–213 (FYSPPE). Residues 224–234 (KQDSEKPLLEL) show a composition bias toward basic and acidic residues.

Belongs to the STARD3 family. Homodimer. Interacts (via the MENTAL domain) with STARD3NL. Interacts (via FFAT motif) with VAPA. Interacts (via FFAT motif) with VAPB. Interacts (via FFAT motif) with MOSPD2 (via MSP domain).

Its subcellular location is the late endosome membrane. Functionally, tethering protein that creates contact site between the endoplasmic reticulum and late endosomes: localizes to late endosome membranes and contacts the endoplasmic reticulum via interaction with VAPA and VAPB. This chain is STARD3 N-terminal-like protein, found in Homo sapiens (Human).